A 345-amino-acid chain; its full sequence is L-threonine 3-dehydrogenase (345 aa).

Cysteine 42 provides a ligand contact to Zn(2+). Catalysis depends on charge relay system residues threonine 44 and histidine 47. Zn(2+) is bound by residues histidine 67, glutamate 68, cysteine 97, cysteine 100, cysteine 103, and cysteine 111. Residues isoleucine 179, aspartate 199, arginine 204, 266 to 268, and 290 to 291 each bind NAD(+); these read LGI and IY.

It belongs to the zinc-containing alcohol dehydrogenase family. In terms of assembly, homotetramer. Zn(2+) serves as cofactor.

The protein localises to the cytoplasm. The enzyme catalyses L-threonine + NAD(+) = (2S)-2-amino-3-oxobutanoate + NADH + H(+). Its pathway is amino-acid degradation; L-threonine degradation via oxydo-reductase pathway; glycine from L-threonine: step 1/2. In terms of biological role, catalyzes the NAD(+)-dependent oxidation of L-threonine to 2-amino-3-ketobutyrate. This Rhizobium rhizogenes (strain K84 / ATCC BAA-868) (Agrobacterium radiobacter) protein is L-threonine 3-dehydrogenase.